The primary structure comprises 171 residues: 3-hydroxydecanoyl-[acyl-carrier-protein] dehydratase (171 aa).

Residue His-70 is part of the active site.

This sequence belongs to the thioester dehydratase family. FabA subfamily. As to quaternary structure, homodimer.

Its subcellular location is the cytoplasm. The catalysed reaction is a (3R)-hydroxyacyl-[ACP] = a (2E)-enoyl-[ACP] + H2O. The enzyme catalyses (3R)-hydroxydecanoyl-[ACP] = (2E)-decenoyl-[ACP] + H2O. It carries out the reaction (2E)-decenoyl-[ACP] = (3Z)-decenoyl-[ACP]. It functions in the pathway lipid metabolism; fatty acid biosynthesis. In terms of biological role, necessary for the introduction of cis unsaturation into fatty acids. Catalyzes the dehydration of (3R)-3-hydroxydecanoyl-ACP to E-(2)-decenoyl-ACP and then its isomerization to Z-(3)-decenoyl-ACP. Can catalyze the dehydratase reaction for beta-hydroxyacyl-ACPs with saturated chain lengths up to 16:0, being most active on intermediate chain length. This is 3-hydroxydecanoyl-[acyl-carrier-protein] dehydratase from Shewanella sediminis (strain HAW-EB3).